The following is a 758-amino-acid chain: Vitamin K-dependent gamma-carboxylase (758 aa).

Residues 1 to 22 form a disordered region; the sequence is MAVSAGSARTSPSSDKVQKDKA. Position 2 is an N-acetylalanine (Ala-2). Over 2–60 the chain is Cytoplasmic; sequence AVSAGSARTSPSSDKVQKDKAELISGPRQDSRIGKLLGFEWTDLSSWRRLVTLLNRPTD. A helical transmembrane segment spans residues 61–81; sequence PASLAVFRFLFGFLMVLDIPQ. Residues 82 to 113 are Lumenal-facing; that stretch reads ERGLSSLDRKYLDGLDVCRFPLLDALRPLPLD. Cys-99 and Cys-450 are disulfide-bonded. The chain crosses the membrane as a helical span at residues 114–134; sequence WMYLVYTIMFLGALGMMLGLC. Topologically, residues 135 to 136 are cytoplasmic; that stretch reads YR. The helical transmembrane segment at 137 to 157 threads the bilayer; sequence ISCVLFLLPYWYVFLLDKTSW. Over 158 to 292 the chain is Lumenal; sequence NNHSYLYGLL…VSYFHCMNSQ (135 aa). The Proton acceptor role is filled by Lys-218. The helical transmembrane segment at 293 to 313 threads the bilayer; it reads LFSIGMFSYVMLASSPLFCSP. At 314 to 361 the chain is on the cytoplasmic side; it reads EWPRKLVSYCPRRLQQLLPLKAAPQPSVSCVYKRSRGKSGQKPGLRHQ. Residues 362 to 382 traverse the membrane as a helical segment; it reads LGAAFTLLYLLEQLFLPYSHF. Residues 383–758 lie on the Lumenal side of the membrane; sequence LTQGYNNWTN…SNPDPVHSEF (376 aa). 2 N-linked (GlcNAc...) asparagine glycosylation sites follow: Asn-459 and Asn-550. A disordered region spans residues 732 to 758; sequence GELNPSNTDSSHSNPPESNPDPVHSEF. Residues 735–747 are compositionally biased toward polar residues; it reads NPSNTDSSHSNPP.

It belongs to the vitamin K-dependent gamma-carboxylase family. Monomer. May interact with CALU.

It is found in the endoplasmic reticulum membrane. It catalyses the reaction 4-carboxy-L-glutamyl-[protein] + 2,3-epoxyphylloquinone + H2O + H(+) = phylloquinol + L-glutamyl-[protein] + CO2 + O2. In terms of biological role, mediates the vitamin K-dependent carboxylation of glutamate residues to calcium-binding gamma-carboxyglutamate (Gla) residues with the concomitant conversion of the reduced hydroquinone form of vitamin K to vitamin K epoxide. Catalyzes gamma-carboxylation of various proteins, such as blood coagulation factors (F2, F7, F9 and F10), osteocalcin (BGLAP) or matrix Gla protein (MGP). In Homo sapiens (Human), this protein is Vitamin K-dependent gamma-carboxylase (GGCX).